The chain runs to 308 residues: Ribonuclease Z (308 aa).

Histidine 60, histidine 62, aspartate 64, histidine 65, histidine 140, aspartate 209, and histidine 269 together coordinate Zn(2+). The Proton acceptor role is filled by aspartate 64.

This sequence belongs to the RNase Z family. As to quaternary structure, homodimer. Zn(2+) is required as a cofactor.

It catalyses the reaction Endonucleolytic cleavage of RNA, removing extra 3' nucleotides from tRNA precursor, generating 3' termini of tRNAs. A 3'-hydroxy group is left at the tRNA terminus and a 5'-phosphoryl group is left at the trailer molecule.. Its function is as follows. Zinc phosphodiesterase, which displays some tRNA 3'-processing endonuclease activity. Probably involved in tRNA maturation, by removing a 3'-trailer from precursor tRNA. The polypeptide is Ribonuclease Z (Methanococcus maripaludis (strain C6 / ATCC BAA-1332)).